The primary structure comprises 638 residues: 1-deoxy-D-xylulose-5-phosphate synthase (638 aa).

Thiamine diphosphate contacts are provided by residues His-79 and 120–122 (GHS). Asp-151 contacts Mg(2+). Thiamine diphosphate contacts are provided by residues 152-153 (GA), Asn-182, Tyr-291, and Glu-373. Asn-182 lines the Mg(2+) pocket.

It belongs to the transketolase family. DXPS subfamily. As to quaternary structure, homodimer. The cofactor is Mg(2+). Thiamine diphosphate is required as a cofactor.

It carries out the reaction D-glyceraldehyde 3-phosphate + pyruvate + H(+) = 1-deoxy-D-xylulose 5-phosphate + CO2. The protein operates within metabolic intermediate biosynthesis; 1-deoxy-D-xylulose 5-phosphate biosynthesis; 1-deoxy-D-xylulose 5-phosphate from D-glyceraldehyde 3-phosphate and pyruvate: step 1/1. Catalyzes the acyloin condensation reaction between C atoms 2 and 3 of pyruvate and glyceraldehyde 3-phosphate to yield 1-deoxy-D-xylulose-5-phosphate (DXP). This chain is 1-deoxy-D-xylulose-5-phosphate synthase, found in Xanthomonas oryzae pv. oryzae (strain MAFF 311018).